The following is a 203-amino-acid chain: Anti-sigma-W factor RsiW (203 aa).

Topologically, residues 1 to 86 (MECPKEIVLL…TARLRRFLHR (86 aa)) are cytoplasmic. Residues His30, Cys34, and Cys37 each coordinate Zn(2+). Residues 87–103 (HPLLTAASLFLALTLGS) traverse the membrane as a helical segment. Residues 104 to 203 (LASSWGERGA…RFNRALQSIE (100 aa)) are Extracellular-facing.

The protein belongs to the zinc-associated anti-sigma factor (ZAS) superfamily. Anti-sigma-W factor family. Zn(2+) is required as a cofactor. Is processed by three successive proteolytic events. First, the extracellular region of RsiW is cleaved by PrsW (Site-1 cleavage) in response to cell envelope stresses. Next, it undergoes cleavage at an intramembrane site (Site-2 cleavage) mediated by RasP. This cleavage uncovers a cryptic proteolytic tag with conserved alanine residues in the transmembrane segment, that is recognized mainly by the ClpXP protease, which completely degrades the protein in the cytoplasm and leads to the induction of the sigma-W-controlled genes.

It localises to the membrane. In terms of biological role, is the anti-sigma factor for SigW. The presence of RsiW leads to the inactivation of SigW, and its proteolytic destruction to sigma-W activation. The polypeptide is Anti-sigma-W factor RsiW (rsiW) (Geobacillus kaustophilus (strain HTA426)).